Here is an 85-residue protein sequence, read N- to C-terminus: Toxin To6 (85 aa).

The signal sequence occupies residues 1–20; that stretch reads MSIFPIILALLLIGLDEGEA. The 63-residue stretch at 21-83 folds into the LCN-type CS-alpha/beta domain; sequence LDGYPLSKNN…EMYPGRLPCN (63 aa). Disulfide bonds link C32–C82, C36–C59, C42–C64, and C46–C66.

In terms of tissue distribution, expressed by the venom gland.

It localises to the secreted. Beta toxins bind voltage-independently at site-4 of sodium channels (Nav) and shift the voltage of activation toward more negative potentials thereby affecting sodium channel activation and promoting spontaneous and repetitive firing. The protein is Toxin To6 of Tityus obscurus (Amazonian scorpion).